The sequence spans 424 residues: GTPase Obg (424 aa).

In terms of domain architecture, Obg spans 1-158 (MFVDRAEVFV…RYISLELKIL (158 aa)). The disordered stretch occupies residues 21–42 (SFRREKYVPRGGPDGGDGGKGG). The segment covering 32-42 (GPDGGDGGKGG) has biased composition (gly residues). Positions 159-331 (ADVGLLGFPN…LMKEAAAMLT (173 aa)) constitute an OBG-type G domain. Residues 165–172 (GFPNVGKS), 190–194 (FTTLS), 212–215 (DIPG), 282–285 (NKAD), and 312–314 (SAA) each bind GTP. 2 residues coordinate Mg(2+): S172 and T192. In terms of domain architecture, OCT spans 345–424 (KFIPEEKRFT…LNDFEFDYIL (80 aa)).

Belongs to the TRAFAC class OBG-HflX-like GTPase superfamily. OBG GTPase family. In terms of assembly, monomer. Mg(2+) serves as cofactor.

The protein resides in the cytoplasm. Its function is as follows. An essential GTPase which binds GTP, GDP and possibly (p)ppGpp with moderate affinity, with high nucleotide exchange rates and a fairly low GTP hydrolysis rate. Plays a role in control of the cell cycle, stress response, ribosome biogenesis and in those bacteria that undergo differentiation, in morphogenesis control. This Clostridium kluyveri (strain NBRC 12016) protein is GTPase Obg.